Here is a 596-residue protein sequence, read N- to C-terminus: Aspartate--tRNA(Asp/Asn) ligase (596 aa).

Glu172 provides a ligand contact to L-aspartate. The interval 196 to 199 (QLFK) is aspartate. L-aspartate is bound at residue Arg218. ATP-binding positions include 218–220 (RDE) and Gln227. His450 provides a ligand contact to L-aspartate. ATP is bound at residue Glu484. Arg491 provides a ligand contact to L-aspartate. 536-539 (GLDR) provides a ligand contact to ATP.

This sequence belongs to the class-II aminoacyl-tRNA synthetase family. Type 1 subfamily. Homodimer.

It localises to the cytoplasm. The catalysed reaction is tRNA(Asx) + L-aspartate + ATP = L-aspartyl-tRNA(Asx) + AMP + diphosphate. In terms of biological role, aspartyl-tRNA synthetase with relaxed tRNA specificity since it is able to aspartylate not only its cognate tRNA(Asp) but also tRNA(Asn). Reaction proceeds in two steps: L-aspartate is first activated by ATP to form Asp-AMP and then transferred to the acceptor end of tRNA(Asp/Asn). This Acidithiobacillus ferrooxidans (strain ATCC 23270 / DSM 14882 / CIP 104768 / NCIMB 8455) (Ferrobacillus ferrooxidans (strain ATCC 23270)) protein is Aspartate--tRNA(Asp/Asn) ligase.